Here is a 60-residue protein sequence, read N- to C-terminus: Large ribosomal subunit protein uL30 (60 aa).

This sequence belongs to the universal ribosomal protein uL30 family. As to quaternary structure, part of the 50S ribosomal subunit.

In Bacillus anthracis (strain A0248), this protein is Large ribosomal subunit protein uL30.